Consider the following 425-residue polypeptide: Secernin-2 (425 aa).

Cysteine 12 is a catalytic residue. Position 52 is a phosphothreonine (threonine 52).

The protein belongs to the peptidase C69 family. Secernin subfamily.

The protein is Secernin-2 (SCRN2) of Homo sapiens (Human).